A 95-amino-acid polypeptide reads, in one-letter code: Small ribosomal subunit protein uS17 (95 aa).

It belongs to the universal ribosomal protein uS17 family. Part of the 30S ribosomal subunit.

Functionally, one of the primary rRNA binding proteins, it binds specifically to the 5'-end of 16S ribosomal RNA. The chain is Small ribosomal subunit protein uS17 from Synechococcus sp. (strain CC9902).